An 87-amino-acid polypeptide reads, in one-letter code: U-actitoxin-Avd3o (87 aa).

Positions 1-16 (MVYLLCFFLVADVSYG) are cleaved as a signal peptide. In terms of domain architecture, BPTI/Kunitz inhibitor spans 21–71 (CLLPKVVGFCRARFPRYYYNSSSRRCEKFNYGGCGGNANNFSSYYECHIKC). 3 cysteine pairs are disulfide-bonded: cysteine 21-cysteine 71, cysteine 30-cysteine 54, and cysteine 46-cysteine 67.

It belongs to the venom Kunitz-type family. Sea anemone type 2 potassium channel toxin subfamily.

Its subcellular location is the secreted. The protein resides in the nematocyst. In terms of biological role, serine protease inhibitor that inhibits both tissue and plasma kallikreins. Has hemolytic activity. Inhibits voltage-gated potassium channels (Kv). This Anemonia viridis (Snakelocks anemone) protein is U-actitoxin-Avd3o.